We begin with the raw amino-acid sequence, 976 residues long: MDRVCWIMALSWFWMVSTGLVSAEEEVLMNTKLETSDLRWTIYPSGDPEWEEMSGLDEEGNSVRTFQVCPMDSSVSHWLRTRFIPRHGASQVYVEIRFTMMECSAMPASFRTCKETFNLYYYQSDEDTASATHPAWMENPYSKVDTVAADFLLRRGGERKSNVKTVRVGPLSKKGFYLAFQTQGACMALLSVRVFFKKCPAVSRAFSSFPETLPHSLVQQAEGVCVDNSAPTGQSTAPPTMFCGEDGQWVGPPSSTCACKPGYEPVDSDRCRACGLGQYKASVGGSLCRVCPDNSNTHFAGSSLCVCRPGYHRATSDLPDSACTKPPSAPRSIIYQINDTVVTLEWSEPLDRGGRSDLSYSVECMHCRGSLCVQCADSITYRPGQMGVPGRRVIIRGLLPHTTYTFTVLAQNGVSAVSHTSPASSSVNITTSRDVAVPVSGIRRIKASESSVSISWTVPPQTQHSIQDYQLRYSLKGQDDGWQYVSSRSSSVVLNDLSRASQYQVQVRARTAAGYGHFSSAVSISTLPDDEESPSRLMLTGVLVAIGLLILIAVVIVAVFCFRRSTRRRDPDPDKSGQFLMGQGIKVYIDPFTYEDPNEAVREFAKEIDVSFVKIEEVIGAGEFGEVCRGRLKVPGKKENYVAIKTLKGGYTDKQRRDFLSEASIMGQFQHPNIIHLEGVITASCPVMILTEYMENGALDSFLRLNDGQFTPIQLVGMLRGIASGMKYLSEMSFVHRDLAARNILVNSNLVCKVSDFGLSRFLTENSSDPTYTSSLGGKIPIRWTAPEAIAFRKFTSASDVWSYGIVMWEVMSFGERPYWDMSNQDVINAIEQDYRLPPPPECPASLHQLMLDCWQKERSSRPRFCAIVSALDRLIRNPASLKITGRIPDGPSHPLLDQRAPPPLSHCSSVADWLRAIKMERYEDAFMQAGFTAIQHITHISTEDLLRIGVTLAGHQKKILSSVQTLRIHGGSLRY.

A signal peptide spans methionine 1–alanine 23. Topologically, residues glutamate 24 to glycine 541 are extracellular. One can recognise an Eph LBD domain in the interval glutamate 25–arginine 204. Intrachain disulfides connect cysteine 69–cysteine 186 and cysteine 103–cysteine 113. Fibronectin type-III domains follow at residues proline 326–aspartate 434 and proline 438–aspartate 529. The helical transmembrane segment at valine 542–phenylalanine 562 threads the bilayer. Topologically, residues arginine 563 to tyrosine 976 are cytoplasmic. The 285-residue stretch at valine 613–leucine 897 folds into the Protein kinase domain. ATP contacts are provided by residues isoleucine 619–valine 627 and lysine 645. Catalysis depends on aspartate 738, which acts as the Proton acceptor. The SAM domain maps to serine 906–histidine 970.

The protein belongs to the protein kinase superfamily. Tyr protein kinase family. Ephrin receptor subfamily.

It localises to the cell membrane. It catalyses the reaction L-tyrosyl-[protein] + ATP = O-phospho-L-tyrosyl-[protein] + ADP + H(+). Functionally, receptor tyrosine kinase which binds promiscuously transmembrane ephrin-B family ligands residing on adjacent cells, leading to contact-dependent bidirectional signaling into neighboring cells. The signaling pathway downstream of the receptor is referred to as forward signaling while the signaling pathway downstream of the ephrin ligand is referred to as reverse signaling. Together with its cognate ligand/functional ligand EFNB2 is involved in the regulation of cell adhesion and cell migration, and plays a central role in heart morphogenesis, angiogenesis and blood vessel remodeling and permeability. EPHB4-mediated forward signaling controls cellular repulsion and segregation from EFNB2-expressing cells. Involved in somitogenesis. The protein is Ephrin type-B receptor 4b of Danio rerio (Zebrafish).